A 99-amino-acid polypeptide reads, in one-letter code: Aspartyl/glutamyl-tRNA(Asn/Gln) amidotransferase subunit C (99 aa).

The protein belongs to the GatC family. In terms of assembly, heterotrimer of A, B and C subunits.

The enzyme catalyses L-glutamyl-tRNA(Gln) + L-glutamine + ATP + H2O = L-glutaminyl-tRNA(Gln) + L-glutamate + ADP + phosphate + H(+). The catalysed reaction is L-aspartyl-tRNA(Asn) + L-glutamine + ATP + H2O = L-asparaginyl-tRNA(Asn) + L-glutamate + ADP + phosphate + 2 H(+). Its function is as follows. Allows the formation of correctly charged Asn-tRNA(Asn) or Gln-tRNA(Gln) through the transamidation of misacylated Asp-tRNA(Asn) or Glu-tRNA(Gln) in organisms which lack either or both of asparaginyl-tRNA or glutaminyl-tRNA synthetases. The reaction takes place in the presence of glutamine and ATP through an activated phospho-Asp-tRNA(Asn) or phospho-Glu-tRNA(Gln). The chain is Aspartyl/glutamyl-tRNA(Asn/Gln) amidotransferase subunit C from Macrococcus caseolyticus (strain JCSC5402) (Macrococcoides caseolyticum).